Consider the following 411-residue polypeptide: MADVVVGIQWGDEGKGKIVDRIAKDYDFVVRYQGGHNAGHTIVHKGVKHSLHLMPSGVLYPKCKNIISSAVVVSIKDLCEEISAFEDLENRLFISDRAHVILPYHAKKDAFKEKSQNIGTTKKGIGPCYEDKMARSGIRMGDLLDDTILEEKLNAHFKAIEPFKEAYDLGEDYEKDLREYFKQYTPKIRPFIKDTTSMLIEANQKGAKILLEGAQGTLLDIDLGTYPFVTSSNTTSASACVSTGLNPKAINEVIGITKAYSTRVGNGPFPSEDATPMGDHLRTKGAEFGTTTKRPRRCGWLDLVALKYACALNGCTQLALMKLDVLDGIDAIKVCVAYERKGERLEAFPSDLKDCVPVYQTFKGWEKSVGVRKLDDLEPNAREYIRFIEKEVGVKIRLISTSPEREDTIFL.

GTP-binding positions include 11–17 (GDEGKGK) and 39–41 (GHT). The Proton acceptor role is filled by Asp12. The Mg(2+) site is built by Asp12 and Gly39. IMP contacts are provided by residues 12 to 15 (DEGK), 37 to 40 (NAGH), Thr121, Arg135, Gln215, Thr230, and Arg294. The active-site Proton donor is the His40. 290–296 (TTTKRPR) lines the substrate pocket. GTP contacts are provided by residues Arg296, 322 to 324 (KLD), and 400 to 402 (STS).

Belongs to the adenylosuccinate synthetase family. Homodimer. It depends on Mg(2+) as a cofactor.

The protein resides in the cytoplasm. The catalysed reaction is IMP + L-aspartate + GTP = N(6)-(1,2-dicarboxyethyl)-AMP + GDP + phosphate + 2 H(+). It functions in the pathway purine metabolism; AMP biosynthesis via de novo pathway; AMP from IMP: step 1/2. Functionally, plays an important role in the de novo pathway of purine nucleotide biosynthesis. Catalyzes the first committed step in the biosynthesis of AMP from IMP. In Helicobacter pylori (strain HPAG1), this protein is Adenylosuccinate synthetase.